The sequence spans 256 residues: Triosephosphate isomerase (256 aa).

Residue N9 to K11 participates in substrate binding. The active-site Electrophile is the H97. Residue E169 is the Proton acceptor of the active site. Substrate contacts are provided by residues G175, S214, and G235–G236.

The protein belongs to the triosephosphate isomerase family. As to quaternary structure, homodimer.

It is found in the cytoplasm. It catalyses the reaction D-glyceraldehyde 3-phosphate = dihydroxyacetone phosphate. It participates in carbohydrate biosynthesis; gluconeogenesis. It functions in the pathway carbohydrate degradation; glycolysis; D-glyceraldehyde 3-phosphate from glycerone phosphate: step 1/1. Involved in the gluconeogenesis. Catalyzes stereospecifically the conversion of dihydroxyacetone phosphate (DHAP) to D-glyceraldehyde-3-phosphate (G3P). The polypeptide is Triosephosphate isomerase (Moritella marina (Vibrio marinus)).